The sequence spans 138 residues: Large ribosomal subunit protein uL16 (138 aa).

The span at 1-16 (MLIPKRVKYRRQHRPT) shows a compositional bias: basic residues. Residues 1 to 23 (MLIPKRVKYRRQHRPTRSGISKG) are disordered.

The protein belongs to the universal ribosomal protein uL16 family. Part of the 50S ribosomal subunit.

In terms of biological role, binds 23S rRNA and is also seen to make contacts with the A and possibly P site tRNAs. This is Large ribosomal subunit protein uL16 from Corynebacterium glutamicum (strain R).